The chain runs to 428 residues: Dihydroorotase (428 aa).

Positions 59 and 61 each coordinate Zn(2+). Substrate is bound by residues histidine 61–arginine 63 and asparagine 93. 3 residues coordinate Zn(2+): aspartate 151, histidine 178, and histidine 231. Asparagine 277 contributes to the substrate binding site. Residue aspartate 304 participates in Zn(2+) binding. The active site involves aspartate 304. Residues histidine 308 and phenylalanine 322–glycine 323 each bind substrate.

The protein belongs to the metallo-dependent hydrolases superfamily. DHOase family. Class I DHOase subfamily. Zn(2+) serves as cofactor.

The catalysed reaction is (S)-dihydroorotate + H2O = N-carbamoyl-L-aspartate + H(+). Its pathway is pyrimidine metabolism; UMP biosynthesis via de novo pathway; (S)-dihydroorotate from bicarbonate: step 3/3. Its function is as follows. Catalyzes the reversible cyclization of carbamoyl aspartate to dihydroorotate. The chain is Dihydroorotase from Bacillus cereus (strain B4264).